Here is a 173-residue protein sequence, read N- to C-terminus: Thiol-disulfide oxidoreductase ResA (173 aa).

Residues 10–29 (VIILLILSGAVGFTLYQGFF) traverse the membrane as a helical; Signal-anchor for type II membrane protein segment. The region spanning 35–173 (MQIGKEAPNF…LEGYLKKITP (139 aa)) is the Thioredoxin domain. C73 and C76 are disulfide-bonded.

This sequence belongs to the thioredoxin family. ResA subfamily.

The protein localises to the cell membrane. The protein operates within protein modification; cytochrome c assembly. In terms of biological role, thiol-disulfide oxidoreductase which is required in disulfide reduction during c-type cytochrome synthesis. May accept reducing equivalents from CcdA, leading to breakage of disulfide bonds in apocytochrome c; following this reduction heme can be covalently attached. The polypeptide is Thiol-disulfide oxidoreductase ResA (Bacillus thuringiensis (strain Al Hakam)).